The sequence spans 508 residues: Glycerol kinase (508 aa).

ADP is bound at residue T14. 3 residues coordinate ATP: T14, T15, and S16. Position 14 (T14) interacts with sn-glycerol 3-phosphate. An ADP-binding site is contributed by R18. Positions 84, 85, and 136 each coordinate sn-glycerol 3-phosphate. 3 residues coordinate glycerol: R84, E85, and Y136. Residue H232 is modified to Phosphohistidine; by HPr. D246 contributes to the sn-glycerol 3-phosphate binding site. Residues D246 and Q247 each coordinate glycerol. T268 and G311 together coordinate ADP. Positions 268, 311, 315, and 412 each coordinate ATP. ADP-binding residues include G412 and N416.

The protein belongs to the FGGY kinase family. In terms of assembly, homotetramer and homodimer (in equilibrium). The phosphoenolpyruvate-dependent sugar phosphotransferase system (PTS), including enzyme I, and histidine-containing protein (HPr) are required for the phosphorylation, which leads to the activation of the enzyme.

The enzyme catalyses glycerol + ATP = sn-glycerol 3-phosphate + ADP + H(+). Its pathway is polyol metabolism; glycerol degradation via glycerol kinase pathway; sn-glycerol 3-phosphate from glycerol: step 1/1. Activated by phosphorylation and inhibited by fructose 1,6-bisphosphate (FBP). In terms of biological role, key enzyme in the regulation of glycerol uptake and metabolism. Catalyzes the phosphorylation of glycerol to yield sn-glycerol 3-phosphate. In Streptococcus pyogenes serotype M28 (strain MGAS6180), this protein is Glycerol kinase.